The sequence spans 210 residues: Thymidylate kinase (210 aa).

Residue 10-17 participates in ATP binding; that stretch reads GPEGAGKS.

This sequence belongs to the thymidylate kinase family.

The enzyme catalyses dTMP + ATP = dTDP + ADP. Phosphorylation of dTMP to form dTDP in both de novo and salvage pathways of dTTP synthesis. The chain is Thymidylate kinase from Pseudomonas aeruginosa (strain LESB58).